Here is a 326-residue protein sequence, read N- to C-terminus: GTP 3',8-cyclase (326 aa).

Residues 7 to 240 enclose the Radical SAM core domain; it reads AFARKFYYLR…AQVFHHSDYQ (234 aa). GTP is bound at residue arginine 16. [4Fe-4S] cluster is bound by residues cysteine 23 and cysteine 27. S-adenosyl-L-methionine is bound at residue tyrosine 29. Cysteine 30 lines the [4Fe-4S] cluster pocket. Arginine 65 contributes to the GTP binding site. Glycine 69 provides a ligand contact to S-adenosyl-L-methionine. Residue threonine 96 participates in GTP binding. Serine 120 is an S-adenosyl-L-methionine binding site. Residue lysine 157 coordinates GTP. Methionine 191 provides a ligand contact to S-adenosyl-L-methionine. Residues cysteine 254 and cysteine 257 each coordinate [4Fe-4S] cluster. A GTP-binding site is contributed by 259–261; the sequence is RLR. Cysteine 271 contributes to the [4Fe-4S] cluster binding site.

It belongs to the radical SAM superfamily. MoaA family. Monomer and homodimer. Requires [4Fe-4S] cluster as cofactor.

It carries out the reaction GTP + AH2 + S-adenosyl-L-methionine = (8S)-3',8-cyclo-7,8-dihydroguanosine 5'-triphosphate + 5'-deoxyadenosine + L-methionine + A + H(+). It participates in cofactor biosynthesis; molybdopterin biosynthesis. Catalyzes the cyclization of GTP to (8S)-3',8-cyclo-7,8-dihydroguanosine 5'-triphosphate. This Yersinia pestis protein is GTP 3',8-cyclase.